A 361-amino-acid polypeptide reads, in one-letter code: Peptide chain release factor 1 (361 aa).

N5-methylglutamine is present on Gln-235. The disordered stretch occupies residues 283-306 (RSQQATAEAMTRKLQVGSGDRSQR).

The protein belongs to the prokaryotic/mitochondrial release factor family. Methylated by PrmC. Methylation increases the termination efficiency of RF1.

Its subcellular location is the cytoplasm. Peptide chain release factor 1 directs the termination of translation in response to the peptide chain termination codons UAG and UAA. This Xylella fastidiosa (strain M23) protein is Peptide chain release factor 1.